We begin with the raw amino-acid sequence, 231 residues long: MIAGGELAALPPQAPQPAGTPALVVRRLGCVDYEPTWHAMRAFTDARSADTPDEIWLLEHPPVYTLGQAGQPEHLLRDVGIPLVKIDRGGQITYHGPGQLVAYLLIDLHRRGLKVRELVTLMEQAVIDCLAGYGVGAERKAGAPGVYVDGAKIGALGLRVRNGRSYHGLALNVDVDLAPFSSINPCGYEGLRTVRMKDFGIADDVASVGEHLLTALQRLLPPVYPAGRPPA.

Residues 49 to 224 (ADTPDEIWLL…ALQRLLPPVY (176 aa)) form the BPL/LPL catalytic domain. Residues 88–95 (RGGQITYH), 155–157 (ALG), and 168–170 (GLA) each bind substrate. Cys186 acts as the Acyl-thioester intermediate in catalysis.

Belongs to the LipB family.

The protein resides in the cytoplasm. The catalysed reaction is octanoyl-[ACP] + L-lysyl-[protein] = N(6)-octanoyl-L-lysyl-[protein] + holo-[ACP] + H(+). It functions in the pathway protein modification; protein lipoylation via endogenous pathway; protein N(6)-(lipoyl)lysine from octanoyl-[acyl-carrier-protein]: step 1/2. Functionally, catalyzes the transfer of endogenously produced octanoic acid from octanoyl-acyl-carrier-protein onto the lipoyl domains of lipoate-dependent enzymes. Lipoyl-ACP can also act as a substrate although octanoyl-ACP is likely to be the physiological substrate. This chain is Octanoyltransferase, found in Aromatoleum aromaticum (strain DSM 19018 / LMG 30748 / EbN1) (Azoarcus sp. (strain EbN1)).